Reading from the N-terminus, the 624-residue chain is MTIQILPPQLANQIAAGEVVERPASVIKELVENSLDAGATRVDIEIEKGGSKLIKIHDNGSGISKEDLGLALSRHATSKLSSLDDLDAILSFGFRGEALASISSVSRLTLTSRTADQVEAWQAYAEGSDMAVKVIPAAHPVGSTVEAVDLFFNTPARRRFLKSDKTEFTHIDEWLKRIALVRSDIHFTLKHNGKVVRNYRATNTQDQYLQRLAQISGKKFAEQAIEINCQHDDLKLTGYVQSPFFETPASDTQYFYVNGRLVRDRLVNHAVRQAFAEHETGEQASYVLMLELDPHQVDVNVHPAKHEVRFHQSRYVHDYIFQALQSALHQVGRLAIDSDNKLDTDSHSQSHERGHSAYGVAEPSHSRHDYSHQTAPSTKASTETNRERFSSPISAVPSHTSDVQSRGGATSSYRQQAELPSAAAIASYAELLKTPDVDQGNRGNKELQANVSMPPILAGQYWVLTQEEQLLLLPVRIISTWLLQHEISNKLDSGLVSQPLLMPVSISMDETWSDTLAERELLLRKIGIEVTIRLGQLIIKKVPPYLRQSQLVAVIPDLLQWLRFEEPSNEALASWLAKHDDKRFESAPDTWLAFSQLDDNVQDELIKKAKVLPWQSWLEEYPSD.

The segment covering 340 to 355 (NKLDTDSHSQSHERGH) has biased composition (basic and acidic residues). Positions 340–415 (NKLDTDSHSQ…RGGATSSYRQ (76 aa)) are disordered. 2 stretches are compositionally biased toward polar residues: residues 372–383 (HQTAPSTKASTE) and 391–415 (SPISAVPSHTSDVQSRGGATSSYRQ).

Belongs to the DNA mismatch repair MutL/HexB family.

In terms of biological role, this protein is involved in the repair of mismatches in DNA. It is required for dam-dependent methyl-directed DNA mismatch repair. May act as a 'molecular matchmaker', a protein that promotes the formation of a stable complex between two or more DNA-binding proteins in an ATP-dependent manner without itself being part of a final effector complex. The chain is DNA mismatch repair protein MutL from Shewanella sediminis (strain HAW-EB3).